We begin with the raw amino-acid sequence, 137 residues long: uncharacterized protein (137 aa).

Residues 1–34 (MAALSRALGPLRTPAPPLWIGLFLVATGSQQSLA) form the signal peptide. Polar residues predominate over residues 33–45 (LAQPLPGNTTEAT). Disordered stretches follow at residues 33-54 (LAQPLPGNTTEATPRSLRASGS) and 98-137 (VLSPLHRGPSGHTEASAQRSHMGKLKEPQPQDHKPGLGAS). Residue Asn40 is glycosylated (N-linked (GlcNAc...) asparagine). Over residues 121–137 (KLKEPQPQDHKPGLGAS) the composition is skewed to basic and acidic residues.

The protein localises to the secreted. This is an uncharacterized protein from Homo sapiens (Human).